Here is a 124-residue protein sequence, read N- to C-terminus: Large ribosomal subunit protein bL12 (124 aa).

It belongs to the bacterial ribosomal protein bL12 family. As to quaternary structure, homodimer. Part of the ribosomal stalk of the 50S ribosomal subunit. Forms a multimeric L10(L12)X complex, where L10 forms an elongated spine to which 2 to 4 L12 dimers bind in a sequential fashion. Binds GTP-bound translation factors.

Forms part of the ribosomal stalk which helps the ribosome interact with GTP-bound translation factors. Is thus essential for accurate translation. In Jannaschia sp. (strain CCS1), this protein is Large ribosomal subunit protein bL12.